Reading from the N-terminus, the 1526-residue chain is DNA topoisomerase 2-alpha (1526 aa).

Methionine 1 bears the N-acetylmethionine mark. A Phosphoserine modification is found at serine 4. Residue lysine 17 forms a Glycyl lysine isopeptide (Lys-Gly) (interchain with G-Cter in SUMO2) linkage. Residues asparagine 90, asparagine 118, and 146–148 contribute to the ATP site; that span reads SSN. Residues lysine 154 and lysine 155 each participate in a glycyl lysine isopeptide (Lys-Gly) (interchain with G-Cter in SUMO2) cross-link. Residue 159–166 participates in ATP binding; that stretch reads GRNGYGAK. Position 280 is a phosphothreonine (threonine 280). The tract at residues 340–342 is interaction with DNA; that stretch reads KKK. Lysine 350 is covalently cross-linked (Glycyl lysine isopeptide (Lys-Gly) (interchain with G-Cter in SUMO2)). ATP is bound at residue 374 to 376; that stretch reads QTK. Residues lysine 384, lysine 395, lysine 414, lysine 416, lysine 423, and lysine 438 each participate in a glycyl lysine isopeptide (Lys-Gly) (interchain with G-Cter in SUMO2) cross-link. A Toprim domain is found at 453–570; it reads CTLILTEGDS…SLLRHRFLEE (118 aa). Glutamate 459 provides a ligand contact to Mg(2+). Glycyl lysine isopeptide (Lys-Gly) (interchain with G-Cter in SUMO2) cross-links involve residues lysine 464, lysine 478, and lysine 527. Aspartate 539 and aspartate 541 together coordinate Mg(2+). Glycyl lysine isopeptide (Lys-Gly) (interchain with G-Cter in SUMO2) cross-links involve residues lysine 582, lysine 597, lysine 612, lysine 620, lysine 623, lysine 630, lysine 637, lysine 653, lysine 660, and lysine 674. In terms of domain architecture, Topo IIA-type catalytic spans 713 to 1168; sequence IPSMVDGLKP…TPSDLWKEDL (456 aa). Residue tyrosine 803 is the O-(5'-phospho-DNA)-tyrosine intermediate of the active site. Residues 988–997 form an interaction with DNA region; it reads KLQTSLTCNS. Lysine 1073 participates in a covalent cross-link: Glycyl lysine isopeptide (Lys-Gly) (interchain with G-Cter in SUMO2). Positions 1087-1096 are enriched in basic and acidic residues; sequence AWKEAQQKVP. A disordered region spans residues 1087-1120; that stretch reads AWKEAQQKVPEEEENEENEESESESTSPAAESGP. Positions 1097–1109 are enriched in acidic residues; it reads EEEENEENEESES. Glycyl lysine isopeptide (Lys-Gly) (interchain with G-Cter in SUMO2) cross-links involve residues lysine 1193 and lysine 1201. Serine 1210 is subject to Phosphoserine. Residues 1229-1526 form a disordered region; sequence EKKIRRKIKS…YLEESDDDLF (298 aa). Lysine 1237 participates in a covalent cross-link: Glycyl lysine isopeptide (Lys-Gly) (interchain with G-Cter in SUMO1); alternate. Lysine 1237 is covalently cross-linked (Glycyl lysine isopeptide (Lys-Gly) (interchain with G-Cter in SUMO2); alternate). Residue threonine 1244 is modified to Phosphothreonine. Positions 1254–1268 are enriched in basic and acidic residues; the sequence is LRQRLEKRQKREPGT. Residues lysine 1272, lysine 1279, and lysine 1282 each participate in a glycyl lysine isopeptide (Lys-Gly) (interchain with G-Cter in SUMO2) cross-link. Phosphoserine occurs at positions 1291, 1293, 1295, and 1298. Threonine 1323 is subject to Phosphothreonine. Residues 1326–1346 are compositionally biased toward acidic residues; sequence LDSDDDFSGLDEKDEDEDFFP. Serine 1328 and serine 1333 each carry phosphoserine. Threonine 1350 is subject to Phosphothreonine. Residues lysine 1359, lysine 1363, and lysine 1369 each participate in a glycyl lysine isopeptide (Lys-Gly) (interchain with G-Cter in SUMO2) cross-link. A phosphoserine mark is found at serine 1370 and serine 1373. A Glycyl lysine isopeptide (Lys-Gly) (interchain with G-Cter in SUMO2) cross-link involves residue lysine 1381. A phosphoserine mark is found at serine 1383 and serine 1387. Residues 1417-1427 show a composition bias toward polar residues; that stretch reads TKGQSLTSTAG. Lysine 1418 is covalently cross-linked (Glycyl lysine isopeptide (Lys-Gly) (interchain with G-Cter in SUMO2); alternate). The residue at position 1418 (lysine 1418) is an N6-acetyllysine; alternate. Residues 1429-1435 are interaction with PLSCR1; that stretch reads KKRAVPK. Lysine 1438 is covalently cross-linked (Glycyl lysine isopeptide (Lys-Gly) (interchain with G-Cter in SUMO2); alternate). Position 1438 is an N6-acetyllysine; alternate (lysine 1438). Glycyl lysine isopeptide (Lys-Gly) (interchain with G-Cter in SUMO2) cross-links involve residues lysine 1450 and lysine 1455. Phosphoserine is present on residues serine 1465, serine 1467, serine 1470, and serine 1472. Glycyl lysine isopeptide (Lys-Gly) (interchain with G-Cter in SUMO2) cross-links involve residues lysine 1480 and lysine 1488. The span at 1487 to 1498 shows a compositional bias: basic and acidic residues; it reads LKGEERDFHVDL. At serine 1521 the chain carries Phosphoserine.

It belongs to the type II topoisomerase family. Homodimer. Interacts with COPS5. Interacts with RECQL5; this stimulates DNA decatenation. Interacts with SETMAR; stimulates the topoisomerase activity. Interacts with DHX9; this interaction occurs in a E2 enzyme UBE2I- and RNA-dependent manner, negatively regulates DHX9-mediated double-stranded DNA and RNA duplex helicase activity and stimulates TOP2A-mediated supercoiled DNA relaxation activity. Interacts with HNRNPU (via C-terminus); this interaction protects the topoisomerase TOP2A from degradation and positively regulates the relaxation of supercoiled DNA in a RNA-dependent manner. Interacts with MCM3AP. Interacts with ERCC6. Interacts with PLSCR1. Interacts with GCNA; this interaction allows the resolution of topoisomerase II (TOP2A) DNA-protein cross-links. Interacts with POL1RA/RPA1 (via dock II) and UBTF in the context of Pol I complex; may assist Pol I transcription initiation by releasing supercoils occurring during DNA unwinding. Interacts with TPRN; TPRN interacts with a number of DNA damage response proteins, is recruited to sites of DNA damage and may play a role in DNA damage repair. Requires Mg(2+) as cofactor. Mn(2+) serves as cofactor. Ca(2+) is required as a cofactor. Post-translationally, phosphorylation has no effect on catalytic activity.

It is found in the cytoplasm. The protein resides in the nucleus. Its subcellular location is the nucleoplasm. It localises to the nucleolus. It catalyses the reaction ATP-dependent breakage, passage and rejoining of double-stranded DNA.. In terms of biological role, key decatenating enzyme that alters DNA topology by binding to two double-stranded DNA molecules, generating a double-stranded break in one of the strands, passing the intact strand through the broken strand, and religating the broken strand. May play a role in regulating the period length of BMAL1 transcriptional oscillation. This is DNA topoisomerase 2-alpha (Top2a) from Rattus norvegicus (Rat).